The sequence spans 136 residues: Small ribosomal subunit protein uS9 (136 aa).

The segment at 97-136 (SPDNRKPLKTEGHLSRDPRAKERRKYGLKKARKAPQFSKR) is disordered. The segment covering 98–116 (PDNRKPLKTEGHLSRDPRA) has biased composition (basic and acidic residues). Residues 117–136 (KERRKYGLKKARKAPQFSKR) are compositionally biased toward basic residues.

The protein belongs to the universal ribosomal protein uS9 family.

This Prochlorococcus marinus (strain MIT 9215) protein is Small ribosomal subunit protein uS9.